A 288-amino-acid chain; its full sequence is ATP synthase gamma chain (288 aa).

The protein belongs to the ATPase gamma chain family. F-type ATPases have 2 components, CF(1) - the catalytic core - and CF(0) - the membrane proton channel. CF(1) has five subunits: alpha(3), beta(3), gamma(1), delta(1), epsilon(1). CF(0) has three main subunits: a, b and c.

Its subcellular location is the cell inner membrane. Its function is as follows. Produces ATP from ADP in the presence of a proton gradient across the membrane. The gamma chain is believed to be important in regulating ATPase activity and the flow of protons through the CF(0) complex. This is ATP synthase gamma chain from Aeromonas hydrophila subsp. hydrophila (strain ATCC 7966 / DSM 30187 / BCRC 13018 / CCUG 14551 / JCM 1027 / KCTC 2358 / NCIMB 9240 / NCTC 8049).